A 327-amino-acid chain; its full sequence is Transcription factor bHLH71 (327 aa).

2 disordered regions span residues 46-88 (ISEI…NQRM) and 151-176 (AKLNQSVTSSTSQDSNGEQENPHQPS). Residues 65-76 (RGKKRRRRKPRV) are compositionally biased toward basic residues. Basic and acidic residues predominate over residues 77 to 88 (CKNEEEAENQRM). Residues 85–136 (NQRMTHIAVERNRRRQMNQHLSVLRSLMPQPFAHKGDQASIVGGAIDFIKEL) form the bHLH domain. Polar residues predominate over residues 152-169 (KLNQSVTSSTSQDSNGEQ).

As to quaternary structure, homodimer. Interacts with FAMA. Expressed in leaves, stems, and flowers.

It localises to the nucleus. Transcription factor. May be involved in the differentiation of stomatal guard cells. The chain is Transcription factor bHLH71 (BHLH71) from Arabidopsis thaliana (Mouse-ear cress).